A 171-amino-acid chain; its full sequence is uncharacterized protein (171 aa).

Disordered regions lie at residues 1–50 and 71–91; these read MSHR…THLS and RIDK…PMMK.

This is an uncharacterized protein from Caenorhabditis elegans.